The primary structure comprises 923 residues: Probable ribosylation factor GTPase-activating protein cnt6 (923 aa).

Serine 207 carries the post-translational modification Phosphoserine. Over residues 444–455 the composition is skewed to basic and acidic residues; that stretch reads TTRRDKGREMHR. A disordered region spans residues 444-476; the sequence is TTRRDKGREMHRSQVIQTSGRPKSMAPPSPSPI. Residues 526–632 form the PH domain; that stretch reads KIFKEGLLLV…WIEAICEAAK (107 aa). Residues 714–837 enclose the Arf-GAP domain; sequence NIFIQMLRKT…AFIDFAGVDA (124 aa). The C4-type zinc-finger motif lies at 730 to 754; that stretch reads CADCGSVKDVTWCSINIPVVLCIEC.

Its subcellular location is the cytoplasm. It localises to the cell tip. GTPase-activating protein for the ADP ribosylation factor family. In Schizosaccharomyces pombe (strain 972 / ATCC 24843) (Fission yeast), this protein is Probable ribosylation factor GTPase-activating protein cnt6 (cnt6).